Reading from the N-terminus, the 272-residue chain is Phosphoglycolate phosphatase (272 aa).

Residue Asp19 is the Nucleophile of the active site. The Mg(2+) site is built by Asp19, Asp21, and Asp182.

The protein belongs to the HAD-like hydrolase superfamily. CbbY/CbbZ/Gph/YieH family. Mg(2+) serves as cofactor.

It catalyses the reaction 2-phosphoglycolate + H2O = glycolate + phosphate. The protein operates within organic acid metabolism; glycolate biosynthesis; glycolate from 2-phosphoglycolate: step 1/1. Functionally, specifically catalyzes the dephosphorylation of 2-phosphoglycolate. Is involved in the dissimilation of the intracellular 2-phosphoglycolate formed during the DNA repair of 3'-phosphoglycolate ends, a major class of DNA lesions induced by oxidative stress. This chain is Phosphoglycolate phosphatase, found in Pseudomonas savastanoi pv. phaseolicola (strain 1448A / Race 6) (Pseudomonas syringae pv. phaseolicola (strain 1448A / Race 6)).